The following is a 748-amino-acid chain: 5-methyltetrahydropteroyltriglutamate--homocysteine methyltransferase (748 aa).

Residue lysine 111 coordinates 5-methyltetrahydropteroyltri-L-glutamate. L-homocysteine is bound by residues 428-430 (IGS) and glutamate 478. Residues 428-430 (IGS) and glutamate 478 contribute to the L-methionine site. Residues 509–510 (RC) and tryptophan 555 each bind 5-methyltetrahydropteroyltri-L-glutamate. Aspartate 593 lines the L-homocysteine pocket. L-methionine is bound at residue aspartate 593. Glutamate 599 is a binding site for 5-methyltetrahydropteroyltri-L-glutamate. 3 residues coordinate Zn(2+): histidine 635, cysteine 637, and glutamate 659. Catalysis depends on histidine 687, which acts as the Proton donor. Cysteine 719 contacts Zn(2+).

It belongs to the vitamin-B12 independent methionine synthase family. Requires Zn(2+) as cofactor.

It catalyses the reaction 5-methyltetrahydropteroyltri-L-glutamate + L-homocysteine = tetrahydropteroyltri-L-glutamate + L-methionine. It participates in amino-acid biosynthesis; L-methionine biosynthesis via de novo pathway; L-methionine from L-homocysteine (MetE route): step 1/1. Functionally, catalyzes the transfer of a methyl group from 5-methyltetrahydrofolate to homocysteine resulting in methionine formation. This Herpetosiphon aurantiacus (strain ATCC 23779 / DSM 785 / 114-95) protein is 5-methyltetrahydropteroyltriglutamate--homocysteine methyltransferase.